We begin with the raw amino-acid sequence, 1006 residues long: Pentatricopeptide repeat-containing protein At1g30610, chloroplastic (1006 aa).

The transit peptide at 1–40 directs the protein to the chloroplast; the sequence is MAVTISTNAFVNASLLDESRNSFWRPLFHQPYYNCRRVVR. Disordered stretches follow at residues 180-219 and 248-292; these read LSKSGESSVTVPEDESFRKRYSKQEYHRSSDTSRGIERGS and SSVA…IARG. A compositionally biased stretch (basic and acidic residues) spans 194 to 219; the sequence is ESFRKRYSKQEYHRSSDTSRGIERGS. Polar residues predominate over residues 254 to 263; the sequence is WSNSGESSVT. Over residues 265-284 the composition is skewed to basic and acidic residues; that stretch reads PKDESFRRRYSKQEHHRSSD. PPR repeat units lie at residues 468 to 502, 506 to 536, 542 to 572, 592 to 626, 627 to 657, 661 to 695, 759 to 789, 793 to 827, 840 to 874, and 875 to 909; these read TDYTVMRLIHFLGKLGNWRRVLQVIEWLQRQDRYK, IRIIYTTALNVLGKSRRPVEALNVFHAMLLQ, DMVAYRSIAVTLGQAGHIKELFYVIDTMRSP, DVVVYNAVLNACVQRKQWEGAFWVLQQLKQRGQKP, SPVTYGLIMEVMLACEKYNLVHEFFRKMQKS, NALAYRVLVNTLWKEGKSDEAVHTVEDMESRGIVG, LVVTYTGLIQACVDSGNIKNAAYIFDQMKKV, NLVTCNIMLKAYLQGGLFEEARELFQKMSEDGNHI, DTYTFNTMLDTCAEQEKWDDFGYAYREMLRHGYHF, and NAKRHLRMVLEASRAGKEEVMEATWEHMRRSNRIP.

The protein belongs to the PPR family. P subfamily.

The protein resides in the plastid. It localises to the chloroplast. Functionally, may play a role in embryogenesis. The protein is Pentatricopeptide repeat-containing protein At1g30610, chloroplastic (EMB2279) of Arabidopsis thaliana (Mouse-ear cress).